The sequence spans 314 residues: Ribosome maturation factor RimP (314 aa).

Disordered regions lie at residues 1-20 (MDLD…QPLS), 152-176 (PIEA…AKPE), and 206-314 (AAKA…PAPK). Positions 10-19 (PSAQVGQQPL) are enriched in polar residues. Residues 215 to 227 (DGNNEEQDEEQEE) show a composition bias toward acidic residues. Polar residues predominate over residues 247 to 256 (PEHNPAQNPI). Composition is skewed to basic and acidic residues over residues 270–279 (TEFKKSKTGE) and 303–314 (SGHDMPRKPAPK).

This sequence belongs to the RimP family.

The protein resides in the cytoplasm. Its function is as follows. Required for maturation of 30S ribosomal subunits. This Beijerinckia indica subsp. indica (strain ATCC 9039 / DSM 1715 / NCIMB 8712) protein is Ribosome maturation factor RimP.